A 493-amino-acid polypeptide reads, in one-letter code: 3-octaprenyl-4-hydroxybenzoate carboxy-lyase (493 aa).

Asparagine 172 contacts Mn(2+). Prenylated FMN-binding positions include 175 to 177 (IYR), 189 to 191 (RWL), and 194 to 195 (RG). Residue glutamate 238 participates in Mn(2+) binding. Aspartate 287 (proton donor) is an active-site residue.

It belongs to the UbiD family. As to quaternary structure, homohexamer. Prenylated FMN serves as cofactor. It depends on Mn(2+) as a cofactor.

It localises to the cell membrane. It catalyses the reaction a 4-hydroxy-3-(all-trans-polyprenyl)benzoate + H(+) = a 2-(all-trans-polyprenyl)phenol + CO2. It functions in the pathway cofactor biosynthesis; ubiquinone biosynthesis. Its function is as follows. Catalyzes the decarboxylation of 3-octaprenyl-4-hydroxy benzoate to 2-octaprenylphenol, an intermediate step in ubiquinone biosynthesis. In Shewanella amazonensis (strain ATCC BAA-1098 / SB2B), this protein is 3-octaprenyl-4-hydroxybenzoate carboxy-lyase.